Reading from the N-terminus, the 547-residue chain is Dihydrolipoyllysine-residue acetyltransferase component of pyruvate dehydrogenase complex (547 aa).

Residues 2 to 75 (SELIRVPDIG…KEGDEILELE (74 aa)) enclose the Lipoyl-binding 1 domain. K41 is modified (N6-lipoyllysine). The segment at 75–117 (EVEGGEQPAEAKAEAAPAQPEAPKAEAPAPAPSESKPAAPAAA) is disordered. The segment covering 80–117 (EQPAEAKAEAAPAQPEAPKAEAPAPAPSESKPAAPAAA) has biased composition (low complexity). The Lipoyl-binding 2 domain occupies 119-193 (VQDIKVPDIG…GTGDLILKLK (75 aa)). An N6-lipoyllysine modification is found at K159. Residues 202-231 (EEQPAAAPAQAAAPAAEQKPAAAAPAPAKA) are compositionally biased toward low complexity. The segment at 202–248 (EEQPAAAPAQAAAPAAEQKPAAAAPAPAKADTPAPVGAPSRDGAKVH) is disordered. Residues 248–285 (HAGPAVRMLAREFGVELSEVKASGPKGRILKEDVQVFV) form the Peripheral subunit-binding (PSBD) domain. Residue H520 is part of the active site.

Belongs to the 2-oxoacid dehydrogenase family. Forms a 24-polypeptide structural core with octahedral symmetry. (R)-lipoate serves as cofactor.

The catalysed reaction is N(6)-[(R)-dihydrolipoyl]-L-lysyl-[protein] + acetyl-CoA = N(6)-[(R)-S(8)-acetyldihydrolipoyl]-L-lysyl-[protein] + CoA. Functionally, the pyruvate dehydrogenase complex catalyzes the overall conversion of pyruvate to acetyl-CoA and CO(2). It contains multiple copies of three enzymatic components: pyruvate dehydrogenase (E1), dihydrolipoamide acetyltransferase (E2) and lipoamide dehydrogenase (E3). The chain is Dihydrolipoyllysine-residue acetyltransferase component of pyruvate dehydrogenase complex (aceF) from Pseudomonas aeruginosa (strain ATCC 15692 / DSM 22644 / CIP 104116 / JCM 14847 / LMG 12228 / 1C / PRS 101 / PAO1).